A 1598-amino-acid chain; its full sequence is MGVPTKISILGRESIVADFGIWRNYVAKDLLSSCASSTYILISDTNLTPLYLAGFQQSFENAAAGLSPKPRLLTYEIPPGESSKSRETKADIEDWMLTRQPPCGRDTVIIALGGGVIGDLIGFVAATYMRGVRFVQVPTTLLAMVDSSIGGKTAIDTPNGKNLIGAIWQPQRIYLDMEFLNTLPEREFINGMAEVIKTAAISSEEKFAALENDADVILAAVKSKNTPERLRFSNIQETLKRTILSSAEFKAQVVSADEREGGLRNLLNFGHSIGHAIEAILAPQVLHGECVSIGMVKEAELARHLGILNNVSVARIVKCLASYELPTSLKDERIKRLTAGKHCSVEQIIAYMGVDKKNDGPKKKVVLLSAIGRTYEPRACTVSNEDLQVVLAPSIEVYPGFPKSLNVTCTPPGSKSISNRALVLAALGSGTCRIKNLLHSDDTEVMLTALERLGAATFSWENQGEVLVVNGNGGRMVASPKELYLGNAGTASRFLTTVATLAQNGSVASSVLTGNARMKQRPIGDLVDALKANGADIEYLENPKSLPLKITASGGFAGGEIRLSAKVSSQYVSSLLMCAPYAKEPVTLRLVGGNPVSQLYIDMTTAMMRSFGIDVKKSETEEHTYHIPRGVYKNPAEYVVESDASSATYPLAIAAMTGTSCTVPNIGSKSLQGDARFAIDVLRPMGCTVNQTDFSTSVTGPAGGKLKSIPTIDMEPMTDAFLTASVLAAVARGQGSNHTTRICGIANQRVKECNRIKAMKDELAKFGVTCREHDDGLEIDGIDRSTLCHPPEGVFCYDDHRVAMSFSILALAAEQPTLILEKECVGKTWPGWWDTLAQTFKVKLDGKEVEVEEKAETNGVAHVDKSAASIFIIGMRGAGKTTSGVWVSKALQRPFIDLDDELEKNEGMTIPEMIKQRGWEGFRDSELALLRRVMTEKPMGYIFACGGGVVELPEARELLTQYHKTKGNVILAMRDIKEVMDFLKIDKTRPAYVEDMMSVWLRRKPWYQECSNIQYYSRITQPDGMAQVLHGFNRFLKVITGKLDSLAQMRRKENTFFVSLTFPDLTPASNILKEVTLGSDAVELRVDLLKDPQSDSEIPSVDYVAEQISVLRSRVSVPLVFTIRTKSQGGRFPDDAYDAALRLYCLAIRMGSEFVDLELSFPEQLLRTVTEMKGFSKIIASHHDPEGLLSWANGSWIQIYNKALQYGDVIKLVGVAKTLDDNASLKKFKTWAEAKHDVPLIAINMGYKGQLSRILNGFMTPVSHPGLPFKAAPGQLSAREIRKGLSLMGEIKAKKFAVIGKPVSSSRSPAMHNALFKQMGLPHTYGRIETDNPEDVKEFIRSPDFGGASVTIPLKLDIMPLLDEIAPEAEMIGAVNTIVSVPAAPGDKSQSSRLIGRNTDWQGMVRCLSDAGAYSAATPTTSSAGLIIGGGGTARAAIFALNSMSYSPIYIVGRSPEKLACMASSFPADYNIRIVDDVKALESLPMVAIGTIPGDKPIELHMREVLCEILSLCEKANVEAERRTGITPKRILLEMAYKPSVTSLMKLASDAGWTVLPGLEVLVAQGVYQSEYWTDITPVYENARKAVMGVSSSDDIIS.

The interval 1–384 (MGVPTKISIL…YEPRACTVSN (384 aa)) is 3-dehydroquinate synthase. NAD(+) is bound by residues 44–46 (DTN), 81–84 (ESSK), 114–116 (GGV), and Asp-119. Arg-130 provides a ligand contact to 7-phospho-2-dehydro-3-deoxy-D-arabino-heptonate. Residue 139 to 140 (TT) coordinates NAD(+). 7-phospho-2-dehydro-3-deoxy-D-arabino-heptonate-binding residues include Asp-146 and Lys-152. Lys-161 provides a ligand contact to NAD(+). Asn-162 is a binding site for 7-phospho-2-dehydro-3-deoxy-D-arabino-heptonate. NAD(+)-binding positions include 179-182 (FLNT) and Asn-190. Glu-194 lines the Zn(2+) pocket. Residues 194–197 (EVIK) and Lys-250 contribute to the 7-phospho-2-dehydro-3-deoxy-D-arabino-heptonate site. Catalysis depends on Glu-260, which acts as the Proton acceptor; for 3-dehydroquinate synthase activity. Residues 264-268 (RNLLN) and His-271 contribute to the 7-phospho-2-dehydro-3-deoxy-D-arabino-heptonate site. Residue His-271 participates in Zn(2+) binding. His-275 acts as the Proton acceptor; for 3-dehydroquinate synthase activity in catalysis. 7-phospho-2-dehydro-3-deoxy-D-arabino-heptonate is bound by residues His-287 and Lys-356. His-287 provides a ligand contact to Zn(2+). The EPSP synthase stretch occupies residues 397–842 (VYPGFPKSLN…WDTLAQTFKV (446 aa)). The active-site For EPSP synthase activity is the Cys-824. Residues 867–1059 (AASIFIIGMR…RRKENTFFVS (193 aa)) are shikimate kinase. 874-881 (GMRGAGKT) serves as a coordination point for ATP. The tract at residues 1060–1280 (LTFPDLTPAS…AAPGQLSARE (221 aa)) is 3-dehydroquinase. The Proton acceptor; for 3-dehydroquinate dehydratase activity role is filled by His-1183. The active-site Schiff-base intermediate with substrate; for 3-dehydroquinate dehydratase activity is the Lys-1211. The interval 1293–1598 (AKKFAVIGKP…GVSSSDDIIS (306 aa)) is shikimate dehydrogenase.

It in the N-terminal section; belongs to the sugar phosphate cyclases superfamily. Dehydroquinate synthase family. The protein in the 2nd section; belongs to the EPSP synthase family. This sequence in the 3rd section; belongs to the shikimate kinase family. In the 4th section; belongs to the type-I 3-dehydroquinase family. It in the C-terminal section; belongs to the shikimate dehydrogenase family. As to quaternary structure, homodimer. Zn(2+) is required as a cofactor.

The protein localises to the cytoplasm. The enzyme catalyses 7-phospho-2-dehydro-3-deoxy-D-arabino-heptonate = 3-dehydroquinate + phosphate. The catalysed reaction is 3-dehydroquinate = 3-dehydroshikimate + H2O. It catalyses the reaction shikimate + NADP(+) = 3-dehydroshikimate + NADPH + H(+). It carries out the reaction shikimate + ATP = 3-phosphoshikimate + ADP + H(+). The enzyme catalyses 3-phosphoshikimate + phosphoenolpyruvate = 5-O-(1-carboxyvinyl)-3-phosphoshikimate + phosphate. The protein operates within metabolic intermediate biosynthesis; chorismate biosynthesis; chorismate from D-erythrose 4-phosphate and phosphoenolpyruvate: step 2/7. It functions in the pathway metabolic intermediate biosynthesis; chorismate biosynthesis; chorismate from D-erythrose 4-phosphate and phosphoenolpyruvate: step 3/7. Its pathway is metabolic intermediate biosynthesis; chorismate biosynthesis; chorismate from D-erythrose 4-phosphate and phosphoenolpyruvate: step 4/7. It participates in metabolic intermediate biosynthesis; chorismate biosynthesis; chorismate from D-erythrose 4-phosphate and phosphoenolpyruvate: step 5/7. The protein operates within metabolic intermediate biosynthesis; chorismate biosynthesis; chorismate from D-erythrose 4-phosphate and phosphoenolpyruvate: step 6/7. In terms of biological role, the AROM polypeptide catalyzes 5 consecutive enzymatic reactions in prechorismate polyaromatic amino acid biosynthesis. In Paracoccidioides lutzii (strain ATCC MYA-826 / Pb01) (Paracoccidioides brasiliensis), this protein is Pentafunctional AROM polypeptide.